The chain runs to 264 residues: S-adenosylmethionine decarboxylase proenzyme (264 aa).

Ser112 (schiff-base intermediate with substrate; via pyruvic acid) is an active-site residue. Position 112 is a pyruvic acid (Ser); by autocatalysis (Ser112). The active-site Proton acceptor; for processing activity is His117. Residue Cys140 is the Proton donor; for catalytic activity of the active site.

It belongs to the prokaryotic AdoMetDC family. Type 2 subfamily. In terms of assembly, heterooctamer of four alpha and four beta chains arranged as a tetramer of alpha/beta heterodimers. Requires pyruvate as cofactor. Is synthesized initially as an inactive proenzyme. Formation of the active enzyme involves a self-maturation process in which the active site pyruvoyl group is generated from an internal serine residue via an autocatalytic post-translational modification. Two non-identical subunits are generated from the proenzyme in this reaction, and the pyruvate is formed at the N-terminus of the alpha chain, which is derived from the carboxyl end of the proenzyme. The post-translation cleavage follows an unusual pathway, termed non-hydrolytic serinolysis, in which the side chain hydroxyl group of the serine supplies its oxygen atom to form the C-terminus of the beta chain, while the remainder of the serine residue undergoes an oxidative deamination to produce ammonia and the pyruvoyl group blocking the N-terminus of the alpha chain.

It catalyses the reaction S-adenosyl-L-methionine + H(+) = S-adenosyl 3-(methylsulfanyl)propylamine + CO2. The protein operates within amine and polyamine biosynthesis; S-adenosylmethioninamine biosynthesis; S-adenosylmethioninamine from S-adenosyl-L-methionine: step 1/1. In terms of biological role, catalyzes the decarboxylation of S-adenosylmethionine to S-adenosylmethioninamine (dcAdoMet), the propylamine donor required for the synthesis of the polyamines spermine and spermidine from the diamine putrescine. This is S-adenosylmethionine decarboxylase proenzyme from Salmonella choleraesuis (strain SC-B67).